Consider the following 88-residue polypeptide: Acylphosphatase (88 aa).

The Acylphosphatase-like domain maps to 3–88 (RLVALVKGRV…EAGLKGFHVY (86 aa)). Catalysis depends on residues arginine 18 and asparagine 36.

It belongs to the acylphosphatase family.

It catalyses the reaction an acyl phosphate + H2O = a carboxylate + phosphate + H(+). The protein is Acylphosphatase (acyP) of Thermus thermophilus (strain ATCC BAA-163 / DSM 7039 / HB27).